A 342-amino-acid chain; its full sequence is Trans-3-hydroxy-L-proline dehydratase (342 aa).

The Proton acceptor role is filled by Ser90. Substrate-binding positions include Gly91–Ser92, Asp252, and Gly257–Thr258.

It belongs to the proline racemase family.

The catalysed reaction is trans-3-hydroxy-L-proline = 1-pyrroline-2-carboxylate + H2O. Its function is as follows. Catalyzes the dehydration of trans-3-hydroxy-L-proline (t3LHyp) to Delta(1)-pyrroline-2-carboxylate (Pyr2C). Can also catalyze the epimerization of trans-4-hydroxy-L-proline (t4LHyp) to cis-4-hydroxy-D-proline (c4DHyp), albeit with 150-fold lower efficiency. May be involved in the degradation pathway that converts t3LHyp to L-proline, which would allow R.meliloti to grow on t3LHyp as a sole carbon source. Displays no proline racemase activity. The sequence is that of Trans-3-hydroxy-L-proline dehydratase from Rhizobium meliloti (strain 1021) (Ensifer meliloti).